We begin with the raw amino-acid sequence, 199 residues long: GTP-binding protein Di-Ras2 (199 aa).

GTP is bound by residues 14–21 (GAGGVGKS), 33–39 (RESYIPT), 61–65 (DTTGS), and 121–124 (NKCD). A Phosphoserine modification is found at serine 35. The short motif at 36–44 (YIPTVEDTY) is the Effector region element. Residue serine 126 is modified to Phosphoserine. 152–153 (AK) contributes to the GTP binding site. Cysteine 196 is subject to Cysteine methyl ester. The S-geranylgeranyl cysteine moiety is linked to residue cysteine 196. Residues 197-199 (VVM) constitute a propeptide, removed in mature form.

Belongs to the small GTPase superfamily. Di-Ras family. In terms of processing, ubiquitinated by the ECS(ASB11) complex via 'Lys-11'-linked ubiquitin chains, leading to its degradation by the proteasome.

The protein resides in the cell membrane. It carries out the reaction GTP + H2O = GDP + phosphate + H(+). Functionally, displays low GTPase activity and exists predominantly in the GTP-bound form. The chain is GTP-binding protein Di-Ras2 (Diras2) from Mus musculus (Mouse).